Reading from the N-terminus, the 289-residue chain is Polyamine aminopropyltransferase (289 aa).

One can recognise a PABS domain in the interval 5–245; that stretch reads PGPITLIEPL…YAVNFILGSL (241 aa). S-methyl-5'-thioadenosine is bound at residue Gln36. The spermidine site is built by His67 and Glu91. Residues Asp111 and 143-144 contribute to the S-methyl-5'-thioadenosine site; that span reads DG. Asp164 (proton acceptor) is an active-site residue.

This sequence belongs to the spermidine/spermine synthase family. Homodimer or homotetramer.

The protein localises to the cytoplasm. It carries out the reaction S-adenosyl 3-(methylsulfanyl)propylamine + putrescine = S-methyl-5'-thioadenosine + spermidine + H(+). It functions in the pathway amine and polyamine biosynthesis; spermidine biosynthesis; spermidine from putrescine: step 1/1. Its function is as follows. Catalyzes the irreversible transfer of a propylamine group from the amino donor S-adenosylmethioninamine (decarboxy-AdoMet) to putrescine (1,4-diaminobutane) to yield spermidine. This Pyrobaculum calidifontis (strain DSM 21063 / JCM 11548 / VA1) protein is Polyamine aminopropyltransferase.